Consider the following 198-residue polypeptide: Linker for activation of T-cells family member 2 (198 aa).

Over 1–4 (MAQP) the chain is Extracellular. A helical; Signal-anchor for type III membrane protein transmembrane segment spans residues 5 to 24 (ELLWAAAGLMLLGVAVSACV). Residues cysteine 23 and cysteine 26 are each lipidated (S-palmitoyl cysteine). Residues 25–198 (RCQLYATKRG…PTIDAVVLSK (174 aa)) lie on the Cytoplasmic side of the membrane. Residues tyrosine 136, tyrosine 155, and tyrosine 184 each carry the phosphotyrosine modification.

As to quaternary structure, when phosphorylated, interacts with GRB2. In terms of processing, phosphorylated on tyrosines following cross-linking of BCR; which induces the recruitment of GRB2.

The protein resides in the cell membrane. Involved in BCR (B-cell antigen receptor)-mediated signaling in B-cells. May also be involved in FCER1 (high affinity immunoglobulin epsilon receptor)-mediated signaling in mast cells and FCGR1 (high affinity immunoglobulin gamma Fc receptor I)-mediated signaling in myeloid cells. Couples activation of these receptors and their associated kinases with distal intracellular events such as calcium mobilization through the recruitment of GRB2. This Gallus gallus (Chicken) protein is Linker for activation of T-cells family member 2 (LAT2).